The following is a 208-amino-acid chain: V-type ATP synthase subunit D (208 aa).

The protein belongs to the V-ATPase D subunit family.

In terms of biological role, produces ATP from ADP in the presence of a proton gradient across the membrane. The protein is V-type ATP synthase subunit D of Streptococcus pyogenes serotype M3 (strain ATCC BAA-595 / MGAS315).